Here is a 434-residue protein sequence, read N- to C-terminus: Alpha-enolase (434 aa).

S40 lines the Mg(2+) pocket. The substrate site is built by H158 and E167. E210 serves as the catalytic Proton donor. Mg(2+) contacts are provided by D245, E293, and D318. Residues E293 and D318 each contribute to the substrate site. K343 serves as the catalytic Proton acceptor. Residues 370–373 and K394 contribute to the substrate site; that span reads SHRS.

The protein belongs to the enolase family. In terms of assembly, homodimer. Mg(2+) serves as cofactor.

The protein resides in the cytoplasm. The catalysed reaction is (2R)-2-phosphoglycerate = phosphoenolpyruvate + H2O. Its pathway is carbohydrate degradation; glycolysis; pyruvate from D-glyceraldehyde 3-phosphate: step 4/5. In Sceloporus undulatus (Eastern fence lizard), this protein is Alpha-enolase.